Consider the following 425-residue polypeptide: MLLNKGLLASLLAYTTTAFDLQHIFYKEQYSCPISLPASCSNNTEIKDSCCFEFPGGIMLQTQFWDYIPPKGVSDPDELVRHLGPLDSFTNHGLWPDNCDGTYAQFCNRESNIDDVWHLLNDDQFNGRDDLPINGTDLLETMDMYWKSNTGDDESLWVHEYNKHGTCIRTLYPDCYKKWGVAGNSKKQAVYDYFRIAMKLFHDKDTYQTLKSAGIEPSVEKSYTKLEISNALKEGHSGEVVHFLCDRHGSLNQIWYFHSLKGSLLGEKFVPISALPKGSNCPDDNIKWYPKGHVPSSYRPPNGNHPGTRGVVRIGNGKGFLIKNGHWYLKGTPANFFLIEAPFGNYYLKTRMGYCGIDNSNKVLACNKNVAQAAQFEYDAKKGYIGYNGAYDWYATKYPRGNQQAPVYAGSNDDGYNFQLKFVKA.

An N-terminal signal peptide occupies residues M1 to A18. 5 cysteine pairs are disulfide-bonded: C32–C51, C40–C99, C50–C175, C107–C167, and C245–C281. N42 carries an N-linked (GlcNAc...) asparagine glycan. H92 is an active-site residue. N-linked (GlcNAc...) asparagine glycosylation is present at N134. Active-site residues include E160 and H164.

The protein belongs to the RNase T2 family.

It localises to the vacuole lumen. The protein resides in the cytoplasm. The catalysed reaction is a ribonucleotidyl-ribonucleotide-RNA + H2O = a 3'-end 3'-phospho-ribonucleotide-RNA + a 5'-end dephospho-ribonucleoside-RNA + H(+). Its function is as follows. Rnase which modulates cell survival under stress conditions. Released from the vacuole to the cytoplasm during stress to promote tRNA and rRNA cleavage and to activate separately a downstream pathway that promotes cell death. Involved in cell size, vacuolar morphology and growth at high temperatures and high salt concentration. This chain is Ribonuclease T2-like (RNY1), found in Kluyveromyces lactis (strain ATCC 8585 / CBS 2359 / DSM 70799 / NBRC 1267 / NRRL Y-1140 / WM37) (Yeast).